Reading from the N-terminus, the 257-residue chain is 8-demethyl-8-aminoriboflavin-5'-phosphate synthase (257 aa).

FMN-binding positions include 11–13 (TLR), 19–21 (SQT), 91–94 (ITLN), 132–136 (CGNED), and Tyr240.

The protein belongs to the SsuE family. Homotetramer.

It catalyses the reaction FMN + L-glutamate + 3 A + O2 + H2O = 8-amino-8-demethylriboflavin 5'-phosphate + 2-oxoglutarate + 3 AH2 + CO2 + H(+). It participates in antibiotic biosynthesis. Involved in the biosynthesis of the riboflavin analog antibiotic roseoflavin (3,8-dimethylamino-riboflavin). Catalyzes the site-specific substitution of the C-8 methyl group of riboflavin-5'-phosphate (FMN) by an amino group to yield 8-amino-8-demethylriboflavin 5'-phosphate, via a combined oxidation, decarboxylation and transamination reaction. The catalysis is initiated by an oxidation step in which the C-8 methyl group on the dimethylbenzene ring of FMN is converted to a formyl group to yield the 8-demethyl-8-formylriboflavin-5'-phosphate (OHC-RP) intermediate. In the presence of thiamine, the formyl group is oxidized into a carboxyl group to yield the 8-demethyl-8-carboxyriboflavin-5'-phosphate (HO2C-RP) intermediate. Finally, in the presence of L-glutamate as an amino donor, decarboxylation and aminotransfer occur, resulting in production of 8-demethyl-8-aminoriboflavin-5'-phosphate. Addition of NAD (but not NADP) to the reaction increases the yield 1.7-fold. The reaction also proceeds without the addition of any electron acceptor, and it is possible that molecular oxygen serves this role. The chain is 8-demethyl-8-aminoriboflavin-5'-phosphate synthase from Streptomyces davaonensis (strain DSM 101723 / JCM 4913 / KCC S-0913 / 768).